The sequence spans 193 residues: ATP-dependent Clp protease proteolytic subunit (193 aa).

S98 functions as the Nucleophile in the catalytic mechanism. Residue H123 is part of the active site.

The protein belongs to the peptidase S14 family. As to quaternary structure, fourteen ClpP subunits assemble into 2 heptameric rings which stack back to back to give a disk-like structure with a central cavity, resembling the structure of eukaryotic proteasomes.

It is found in the cytoplasm. The enzyme catalyses Hydrolysis of proteins to small peptides in the presence of ATP and magnesium. alpha-casein is the usual test substrate. In the absence of ATP, only oligopeptides shorter than five residues are hydrolyzed (such as succinyl-Leu-Tyr-|-NHMec, and Leu-Tyr-Leu-|-Tyr-Trp, in which cleavage of the -Tyr-|-Leu- and -Tyr-|-Trp bonds also occurs).. Its function is as follows. Cleaves peptides in various proteins in a process that requires ATP hydrolysis. Has a chymotrypsin-like activity. Plays a major role in the degradation of misfolded proteins. ClpXP is involved in the complete degradation of the Site-2 clipped anti-sigma-W factor RsiW. This results in the release of SigW and the transcription activation of the genes under the control of the sigma-W factor. The polypeptide is ATP-dependent Clp protease proteolytic subunit (Oceanobacillus iheyensis (strain DSM 14371 / CIP 107618 / JCM 11309 / KCTC 3954 / HTE831)).